The following is a 161-amino-acid chain: Allophycocyanin beta chain (161 aa).

Asn-71 is subject to N4-methylasparagine. (2R,3E)-phycocyanobilin is bound at residue Cys-81.

Belongs to the phycobiliprotein family. Heterodimer of an alpha and a beta chain. Post-translationally, contains one covalently linked phycocyanobilin chromophore.

It is found in the cellular thylakoid membrane. Functionally, light-harvesting photosynthetic bile pigment-protein from the phycobiliprotein complex. Allophycocyanin has a maximum absorption at approximately 650 nanometers. This is Allophycocyanin beta chain (apcB) from Synechococcus sp. (strain ATCC 27144 / PCC 6301 / SAUG 1402/1) (Anacystis nidulans).